A 246-amino-acid polypeptide reads, in one-letter code: Ubiquinone/menaquinone biosynthesis C-methyltransferase UbiE (246 aa).

S-adenosyl-L-methionine contacts are provided by residues Thr75, Asp95, and 119–120; that span reads DA.

This sequence belongs to the class I-like SAM-binding methyltransferase superfamily. MenG/UbiE family.

It carries out the reaction a 2-demethylmenaquinol + S-adenosyl-L-methionine = a menaquinol + S-adenosyl-L-homocysteine + H(+). The catalysed reaction is a 2-methoxy-6-(all-trans-polyprenyl)benzene-1,4-diol + S-adenosyl-L-methionine = a 5-methoxy-2-methyl-3-(all-trans-polyprenyl)benzene-1,4-diol + S-adenosyl-L-homocysteine + H(+). Its pathway is quinol/quinone metabolism; menaquinone biosynthesis; menaquinol from 1,4-dihydroxy-2-naphthoate: step 2/2. It participates in cofactor biosynthesis; ubiquinone biosynthesis. Methyltransferase required for the conversion of demethylmenaquinol (DMKH2) to menaquinol (MKH2) and the conversion of 2-polyprenyl-6-methoxy-1,4-benzoquinol (DDMQH2) to 2-polyprenyl-3-methyl-6-methoxy-1,4-benzoquinol (DMQH2). This chain is Ubiquinone/menaquinone biosynthesis C-methyltransferase UbiE, found in Desulfotalea psychrophila (strain LSv54 / DSM 12343).